We begin with the raw amino-acid sequence, 660 residues long: Polycomb protein SCMH1 (660 aa).

2 MBT repeats span residues 28–126 (FTWD…LQPP) and 134–235 (SSWP…LQPP). Residues 233–345 (QPPGTKVVIP…EPDTSTVPQD (113 aa)) are disordered. 2 stretches are compositionally biased toward basic residues: residues 273 to 284 (RGRKPGKKRGRT) and 305 to 320 (FPKK…RKPR). Over residues 330 to 343 (PTTSTPEPDTSTVP) the composition is skewed to low complexity. One can recognise an SAM domain in the interval 593-658 (WTVEDVMQFV…SYHIDRLKQG (66 aa)).

The protein belongs to the SCM family. As to quaternary structure, interacts with the SAM domain of PHC1 via its SAM domain in vitro. Associates with a PRC1-like complex. As to expression, strongly expressed in heart, muscle and pancreas. Weakly expressed in brain, placenta, lung, liver and kidney.

It is found in the nucleus. Associates with Polycomb group (PcG) multiprotein complexes; the complex class is required to maintain the transcriptionally repressive state of some genes. The polypeptide is Polycomb protein SCMH1 (Homo sapiens (Human)).